The primary structure comprises 53 residues: Large ribosomal subunit protein bL33 (53 aa).

It belongs to the bacterial ribosomal protein bL33 family.

The polypeptide is Large ribosomal subunit protein bL33 (Malacoplasma penetrans (strain HF-2) (Mycoplasma penetrans)).